The chain runs to 1588 residues: Pentafunctional AROM polypeptide (1588 aa).

The segment at 1-392 (MVQLAKVPIL…YGDSAQFVSD (392 aa)) is 3-dehydroquinate synthase. NAD(+) is bound by residues 43-45 (DTN), 78-81 (ETSK), 109-111 (GGV), and D114. Residue R125 coordinates 7-phospho-2-dehydro-3-deoxy-D-arabino-heptonate. 134–135 (TS) contacts NAD(+). 7-phospho-2-dehydro-3-deoxy-D-arabino-heptonate contacts are provided by D141 and K147. K156 lines the NAD(+) pocket. N157 contributes to the 7-phospho-2-dehydro-3-deoxy-D-arabino-heptonate binding site. Residues 174-177 (WLET) and N185 contribute to the NAD(+) site. E189 lines the Zn(2+) pocket. Residues 189–192 (EVIK) and K258 contribute to the 7-phospho-2-dehydro-3-deoxy-D-arabino-heptonate site. The active-site Proton acceptor; for 3-dehydroquinate synthase activity is E268. 7-phospho-2-dehydro-3-deoxy-D-arabino-heptonate-binding positions include 272–276 (RNLLN) and H279. H279 serves as a coordination point for Zn(2+). Residue H283 is the Proton acceptor; for 3-dehydroquinate synthase activity of the active site. Residues H295 and K364 each coordinate 7-phospho-2-dehydro-3-deoxy-D-arabino-heptonate. H295 is a Zn(2+) binding site. An EPSP synthase region spans residues 405–871 (VYPFKDIPAD…WDVLHSELGA (467 aa)). C853 serves as the catalytic For EPSP synthase activity. Positions 890–1080 (SVVIIGMRAA…IPSGRSAFVC (191 aa)) are shikimate kinase. 895–902 (GMRAAGKT) is a binding site for ATP. A 3-dehydroquinase region spans residues 1081–1293 (LTFDDLTEQT…AAPGQLTVAQ (213 aa)). The Proton acceptor; for 3-dehydroquinate dehydratase activity role is filled by H1198. K1227 functions as the Schiff-base intermediate with substrate; for 3-dehydroquinate dehydratase activity in the catalytic mechanism. A shikimate dehydrogenase region spans residues 1306 to 1588 (PKELFVVGKP…KAIFDAVTKE (283 aa)).

This sequence in the N-terminal section; belongs to the sugar phosphate cyclases superfamily. Dehydroquinate synthase family. In the 2nd section; belongs to the EPSP synthase family. The protein in the 3rd section; belongs to the shikimate kinase family. It in the 4th section; belongs to the type-I 3-dehydroquinase family. This sequence in the C-terminal section; belongs to the shikimate dehydrogenase family. In terms of assembly, homodimer. Zn(2+) is required as a cofactor.

The protein localises to the cytoplasm. It carries out the reaction 7-phospho-2-dehydro-3-deoxy-D-arabino-heptonate = 3-dehydroquinate + phosphate. The enzyme catalyses 3-dehydroquinate = 3-dehydroshikimate + H2O. It catalyses the reaction shikimate + NADP(+) = 3-dehydroshikimate + NADPH + H(+). The catalysed reaction is shikimate + ATP = 3-phosphoshikimate + ADP + H(+). It carries out the reaction 3-phosphoshikimate + phosphoenolpyruvate = 5-O-(1-carboxyvinyl)-3-phosphoshikimate + phosphate. It participates in metabolic intermediate biosynthesis; chorismate biosynthesis; chorismate from D-erythrose 4-phosphate and phosphoenolpyruvate: step 2/7. It functions in the pathway metabolic intermediate biosynthesis; chorismate biosynthesis; chorismate from D-erythrose 4-phosphate and phosphoenolpyruvate: step 3/7. Its pathway is metabolic intermediate biosynthesis; chorismate biosynthesis; chorismate from D-erythrose 4-phosphate and phosphoenolpyruvate: step 4/7. The protein operates within metabolic intermediate biosynthesis; chorismate biosynthesis; chorismate from D-erythrose 4-phosphate and phosphoenolpyruvate: step 5/7. It participates in metabolic intermediate biosynthesis; chorismate biosynthesis; chorismate from D-erythrose 4-phosphate and phosphoenolpyruvate: step 6/7. Its function is as follows. The AROM polypeptide catalyzes 5 consecutive enzymatic reactions in prechorismate polyaromatic amino acid biosynthesis. This Saccharomyces cerevisiae (strain ATCC 204508 / S288c) (Baker's yeast) protein is Pentafunctional AROM polypeptide.